The primary structure comprises 301 residues: Homoserine kinase (301 aa).

Residue 86–96 coordinates ATP; that stretch reads PLARGLGSSAT.

The protein belongs to the GHMP kinase family. Homoserine kinase subfamily.

The protein resides in the cytoplasm. It carries out the reaction L-homoserine + ATP = O-phospho-L-homoserine + ADP + H(+). It functions in the pathway amino-acid biosynthesis; L-threonine biosynthesis; L-threonine from L-aspartate: step 4/5. In terms of biological role, catalyzes the ATP-dependent phosphorylation of L-homoserine to L-homoserine phosphate. The polypeptide is Homoserine kinase (Thermosynechococcus vestitus (strain NIES-2133 / IAM M-273 / BP-1)).